Consider the following 385-residue polypeptide: Putative actin-25 (385 aa).

This sequence belongs to the actin family.

Its subcellular location is the cytoplasm. It is found in the cytoskeleton. It catalyses the reaction ATP + H2O = ADP + phosphate + H(+). Actins are highly conserved proteins that are involved in various types of cell motility and are ubiquitously expressed in all eukaryotic cells. Multiple isoforms are involved in various cellular functions such as cytoskeleton structure, cell mobility, chromosome movement and muscle contraction. The sequence is that of Putative actin-25 (act25) from Dictyostelium discoideum (Social amoeba).